Reading from the N-terminus, the 81-residue chain is ATP synthase subunit c, chloroplastic (81 aa).

2 helical membrane passes run 3–23 and 57–77; these read PLISAASVIAAGLAVGLASIG and LAFMEALSIYGLVVALALLFA.

It belongs to the ATPase C chain family. In terms of assembly, F-type ATPases have 2 components, F(1) - the catalytic core - and F(0) - the membrane proton channel. F(1) has five subunits: alpha(3), beta(3), gamma(1), delta(1), epsilon(1). F(0) has four main subunits: a(1), b(1), b'(1) and c(10-14). The alpha and beta chains form an alternating ring which encloses part of the gamma chain. F(1) is attached to F(0) by a central stalk formed by the gamma and epsilon chains, while a peripheral stalk is formed by the delta, b and b' chains.

It is found in the plastid. Its subcellular location is the chloroplast thylakoid membrane. Functionally, f(1)F(0) ATP synthase produces ATP from ADP in the presence of a proton or sodium gradient. F-type ATPases consist of two structural domains, F(1) containing the extramembraneous catalytic core and F(0) containing the membrane proton channel, linked together by a central stalk and a peripheral stalk. During catalysis, ATP synthesis in the catalytic domain of F(1) is coupled via a rotary mechanism of the central stalk subunits to proton translocation. In terms of biological role, key component of the F(0) channel; it plays a direct role in translocation across the membrane. A homomeric c-ring of between 10-14 subunits forms the central stalk rotor element with the F(1) delta and epsilon subunits. This is ATP synthase subunit c, chloroplastic from Gossypium barbadense (Sea Island cotton).